Here is a 513-residue protein sequence, read N- to C-terminus: ATP synthase subunit alpha 1 (513 aa).

An ATP-binding site is contributed by 169–176 (GDRQTGKT).

This sequence belongs to the ATPase alpha/beta chains family. In terms of assembly, F-type ATPases have 2 components, CF(1) - the catalytic core - and CF(0) - the membrane proton channel. CF(1) has five subunits: alpha(3), beta(3), gamma(1), delta(1), epsilon(1). CF(0) has three main subunits: a(1), b(2) and c(9-12). The alpha and beta chains form an alternating ring which encloses part of the gamma chain. CF(1) is attached to CF(0) by a central stalk formed by the gamma and epsilon chains, while a peripheral stalk is formed by the delta and b chains.

Its subcellular location is the cell inner membrane. The enzyme catalyses ATP + H2O + 4 H(+)(in) = ADP + phosphate + 5 H(+)(out). Functionally, produces ATP from ADP in the presence of a proton gradient across the membrane. The alpha chain is a regulatory subunit. The sequence is that of ATP synthase subunit alpha 1 from Vibrio campbellii (strain ATCC BAA-1116).